Here is a 521-residue protein sequence, read N- to C-terminus: Probable inorganic phosphate transporter 1-3 (521 aa).

Residues 1–24 (MADQQLGVLKALDVAKTQLYHFTA) lie on the Cytoplasmic side of the membrane. A helical membrane pass occupies residues 25 to 45 (IVIAGMGFFTDAYDLFCVSLV). Residues 46–70 (TKLLGRLYYFNPTSAKPGSLPPHVA) lie on the Extracellular side of the membrane. The helical transmembrane segment at 71-91 (AAVNGVALCGTLAGQLFFGWL) threads the bilayer. Residues 92-99 (GDKLGRKK) lie on the Cytoplasmic side of the membrane. A helical transmembrane segment spans residues 100–120 (VYGITLIMMILCSVASGLSLG). The Extracellular portion of the chain corresponds to 121-131 (NSAKGVMTTLC). The helical transmembrane segment at 132–152 (FFRFWLGFGIGGDYPLSATIM) threads the bilayer. Over 153–161 (SEYANKKTR) the chain is Cytoplasmic. A helical transmembrane segment spans residues 162–182 (GAFIAAVFAMQGVGILAGGFV). Over 183–211 (ALAVSSIFDKKFPSPTYEQDRFLSTPPQA) the chain is Extracellular. The chain crosses the membrane as a helical span at residues 212-232 (DYIWRIIVMFGALPAALTYYW). The Cytoplasmic segment spans residues 233-292 (RMKMPETARYTALVAKNIKQATADMSKVLQTDLELEERVEDDVKDPKKNYGLFSKEFLRR). A helical transmembrane segment spans residues 293-313 (HGLHLLGTTSTWFLLDIAFYS). The Extracellular segment spans residues 314 to 348 (QNLFQKDIFSAIGWIPKAATMNAIHEVFKIARAQT). Residues 349–369 (LIALCSTVPGYWFTVAFIDII) form a helical membrane-spanning segment. At 370–371 (GR) the chain is on the cytoplasmic side. The chain crosses the membrane as a helical span at residues 372 to 392 (FAIQLMGFFMMTVFMFAIAFP). At 393-402 (YNHWILPDNR) the chain is on the extracellular side. Residues 403–423 (IGFVVMYSLTFFFANFGPNAT) traverse the membrane as a helical segment. Topologically, residues 424–441 (TFIVPAEIFPARLRSTCH) are cytoplasmic. A helical membrane pass occupies residues 442 to 462 (GISAATGKAGAIVGAFGFLYA). Residues 463 to 484 (AQPQDKTKTDAGYPPGIGVKNS) lie on the Extracellular side of the membrane. The chain crosses the membrane as a helical span at residues 485-505 (LIMLGVINFVGMLFTFLVPEP). The Cytoplasmic portion of the chain corresponds to 506–521 (KGKSLEELSGEAEVDK).

It belongs to the major facilitator superfamily. Phosphate:H(+) symporter (TC 2.A.1.9) family. As to expression, mainly expressed in roots, especially in the stele of the primary root, the pericycle and trichoblasts of secondary roots. To a lower extent, present in hydathodes and vascular tissues of young leaves.

The protein localises to the membrane. Its function is as follows. High-affinity transporter for external inorganic phosphate. The polypeptide is Probable inorganic phosphate transporter 1-3 (PHT1-3) (Arabidopsis thaliana (Mouse-ear cress)).